We begin with the raw amino-acid sequence, 307 residues long: Bifunctional protein FolD 3 (307 aa).

NADP(+) is bound by residues 169 to 171 (GRS), serine 194, and isoleucine 235.

This sequence belongs to the tetrahydrofolate dehydrogenase/cyclohydrolase family. In terms of assembly, homodimer.

It carries out the reaction (6R)-5,10-methylene-5,6,7,8-tetrahydrofolate + NADP(+) = (6R)-5,10-methenyltetrahydrofolate + NADPH. The enzyme catalyses (6R)-5,10-methenyltetrahydrofolate + H2O = (6R)-10-formyltetrahydrofolate + H(+). Its pathway is one-carbon metabolism; tetrahydrofolate interconversion. Its function is as follows. Catalyzes the oxidation of 5,10-methylenetetrahydrofolate to 5,10-methenyltetrahydrofolate and then the hydrolysis of 5,10-methenyltetrahydrofolate to 10-formyltetrahydrofolate. The chain is Bifunctional protein FolD 3 from Ectopseudomonas mendocina (strain ymp) (Pseudomonas mendocina).